Reading from the N-terminus, the 517-residue chain is Maturase K (517 aa).

It belongs to the intron maturase 2 family. MatK subfamily.

The protein resides in the plastid. Its subcellular location is the chloroplast. In terms of biological role, usually encoded in the trnK tRNA gene intron. Probably assists in splicing its own and other chloroplast group II introns. The chain is Maturase K from Juncus effusus (Soft rush).